We begin with the raw amino-acid sequence, 565 residues long: NAD-dependent malic enzyme (565 aa).

Y104 functions as the Proton donor in the catalytic mechanism. Residue R157 participates in NAD(+) binding. K175 acts as the Proton acceptor in catalysis. A divalent metal cation-binding residues include E246, D247, and D270. Positions 270 and 418 each coordinate NAD(+).

The protein belongs to the malic enzymes family. Homotetramer. Mg(2+) is required as a cofactor. Requires Mn(2+) as cofactor.

It carries out the reaction (S)-malate + NAD(+) = pyruvate + CO2 + NADH. The enzyme catalyses oxaloacetate + H(+) = pyruvate + CO2. This Salmonella newport (strain SL254) protein is NAD-dependent malic enzyme.